A 214-amino-acid chain; its full sequence is Adenylate kinase (214 aa).

Position 10 to 15 (10 to 15 (GVGKGT)) interacts with ATP. An NMP region spans residues 30–59 (STGDILRAAVKELTPMGAKAKGYMDSGALV). AMP-binding positions include T31, R36, 57–59 (ALV), 85–88 (GFPR), and Q92. The interval 126-163 (GRRACANCGAGYHVDFAPSKVAGVCDACSGQLVQREDD) is LID. ATP is bound at residue R127. The Zn(2+) site is built by C130, C133, C150, and C153. AMP contacts are provided by R160 and R171. G199 provides a ligand contact to ATP.

Belongs to the adenylate kinase family. As to quaternary structure, monomer.

It is found in the cytoplasm. It catalyses the reaction AMP + ATP = 2 ADP. Its pathway is purine metabolism; AMP biosynthesis via salvage pathway; AMP from ADP: step 1/1. Its function is as follows. Catalyzes the reversible transfer of the terminal phosphate group between ATP and AMP. Plays an important role in cellular energy homeostasis and in adenine nucleotide metabolism. This chain is Adenylate kinase, found in Citrifermentans bemidjiense (strain ATCC BAA-1014 / DSM 16622 / JCM 12645 / Bem) (Geobacter bemidjiensis).